The sequence spans 328 residues: GTP cyclohydrolase MptA (328 aa).

The protein belongs to the GTP cyclohydrolase IV family. In terms of assembly, homodimer. It depends on Fe(2+) as a cofactor.

It catalyses the reaction GTP + H2O = 7,8-dihydroneopterin 2',3'-cyclic phosphate + formate + diphosphate + H(+). It functions in the pathway cofactor biosynthesis; 5,6,7,8-tetrahydromethanopterin biosynthesis. In terms of biological role, converts GTP to 7,8-dihydro-D-neopterin 2',3'-cyclic phosphate, the first intermediate in the biosynthesis of coenzyme methanopterin. The chain is GTP cyclohydrolase MptA from Methanospirillum hungatei JF-1 (strain ATCC 27890 / DSM 864 / NBRC 100397 / JF-1).